The sequence spans 175 residues: Adenine phosphoribosyltransferase (175 aa).

Belongs to the purine/pyrimidine phosphoribosyltransferase family. Homodimer.

Its subcellular location is the cytoplasm. It carries out the reaction AMP + diphosphate = 5-phospho-alpha-D-ribose 1-diphosphate + adenine. It functions in the pathway purine metabolism; AMP biosynthesis via salvage pathway; AMP from adenine: step 1/1. In terms of biological role, catalyzes a salvage reaction resulting in the formation of AMP, that is energically less costly than de novo synthesis. In Synechococcus sp. (strain CC9902), this protein is Adenine phosphoribosyltransferase.